Reading from the N-terminus, the 126-residue chain is Small ribosomal subunit protein uS12 (126 aa).

Asp89 is modified (3-methylthioaspartic acid). Residues 99-126 (RGSLDTSGVNDRKQGRSKYGTKKPKDKK) form a disordered region. Basic residues predominate over residues 113 to 126 (GRSKYGTKKPKDKK).

Belongs to the universal ribosomal protein uS12 family. In terms of assembly, part of the 30S ribosomal subunit. Contacts proteins S8 and S17. May interact with IF1 in the 30S initiation complex.

Functionally, with S4 and S5 plays an important role in translational accuracy. Its function is as follows. Interacts with and stabilizes bases of the 16S rRNA that are involved in tRNA selection in the A site and with the mRNA backbone. Located at the interface of the 30S and 50S subunits, it traverses the body of the 30S subunit contacting proteins on the other side and probably holding the rRNA structure together. The combined cluster of proteins S8, S12 and S17 appears to hold together the shoulder and platform of the 30S subunit. In Legionella pneumophila (strain Paris), this protein is Small ribosomal subunit protein uS12.